A 112-amino-acid polypeptide reads, in one-letter code: Probable prefoldin subunit 1 (112 aa).

It belongs to the prefoldin subunit beta family. Heterohexamer of two PFD-alpha type and four PFD-beta type subunits.

Binds specifically to cytosolic chaperonin (c-CPN) and transfers target proteins to it. Binds to nascent polypeptide chain and promotes folding in an environment in which there are many competing pathways for nonnative proteins. This Schizosaccharomyces pombe (strain 972 / ATCC 24843) (Fission yeast) protein is Probable prefoldin subunit 1.